Consider the following 377-residue polypeptide: 4-hydroxy-3-methylbut-2-en-1-yl diphosphate synthase (flavodoxin) (377 aa).

Residues Cys-275, Cys-278, Cys-310, and Glu-317 each contribute to the [4Fe-4S] cluster site.

This sequence belongs to the IspG family. [4Fe-4S] cluster serves as cofactor.

It carries out the reaction (2E)-4-hydroxy-3-methylbut-2-enyl diphosphate + oxidized [flavodoxin] + H2O + 2 H(+) = 2-C-methyl-D-erythritol 2,4-cyclic diphosphate + reduced [flavodoxin]. It functions in the pathway isoprenoid biosynthesis; isopentenyl diphosphate biosynthesis via DXP pathway; isopentenyl diphosphate from 1-deoxy-D-xylulose 5-phosphate: step 5/6. Its function is as follows. Converts 2C-methyl-D-erythritol 2,4-cyclodiphosphate (ME-2,4cPP) into 1-hydroxy-2-methyl-2-(E)-butenyl 4-diphosphate. This Ruegeria sp. (strain TM1040) (Silicibacter sp.) protein is 4-hydroxy-3-methylbut-2-en-1-yl diphosphate synthase (flavodoxin).